Reading from the N-terminus, the 183-residue chain is Ribosome rescue factor SmrB (183 aa).

Positions L98 to E173 constitute a Smr domain.

It belongs to the SmrB family. In terms of assembly, associates with collided ribosomes, but not with correctly translating polysomes.

Acts as a ribosome collision sensor. Detects stalled/collided disomes (pairs of ribosomes where the leading ribosome is stalled and a second ribosome has collided with it) and endonucleolytically cleaves mRNA at the 5' boundary of the stalled ribosome. Stalled/collided disomes form a new interface (primarily via the 30S subunits) that binds SmrB. Cleaved mRNA becomes available for tmRNA ligation, leading to ribosomal subunit dissociation and rescue of stalled ribosomes. The polypeptide is Ribosome rescue factor SmrB (Shigella sonnei (strain Ss046)).